Here is a 330-residue protein sequence, read N- to C-terminus: Cytoskeleton protein RodZ (330 aa).

The Cytoplasmic portion of the chain corresponds to Met-1–Gly-111. Residues Leu-19–Leu-71 enclose the HTH cro/C1-type domain. A DNA-binding region (H-T-H motif) is located at residues Gln-30–Asp-49. The chain crosses the membrane as a helical; Signal-anchor for type II membrane protein span at residues Trp-112–Trp-132. The Periplasmic portion of the chain corresponds to Trp-133 to Gln-330. The segment covering Met-146–Leu-166 has biased composition (polar residues). Residues Met-146–Asn-237 are disordered. Composition is skewed to low complexity over residues Thr-176 to Asp-202 and Thr-216 to Thr-233.

Belongs to the RodZ family.

It is found in the cell inner membrane. Its function is as follows. Cytoskeletal protein that is involved in cell-shape control through regulation of the length of the long axis. The polypeptide is Cytoskeleton protein RodZ (Klebsiella pneumoniae (strain 342)).